Reading from the N-terminus, the 290-residue chain is tRNA-cytidine(32) 2-sulfurtransferase (290 aa).

The short motif at 66-71 (SGGKDS) is the PP-loop motif element. 3 residues coordinate [4Fe-4S] cluster: C141, C144, and C232.

This sequence belongs to the TtcA family. In terms of assembly, homodimer. It depends on Mg(2+) as a cofactor. Requires [4Fe-4S] cluster as cofactor.

It is found in the cytoplasm. The enzyme catalyses cytidine(32) in tRNA + S-sulfanyl-L-cysteinyl-[cysteine desulfurase] + AH2 + ATP = 2-thiocytidine(32) in tRNA + L-cysteinyl-[cysteine desulfurase] + A + AMP + diphosphate + H(+). It participates in tRNA modification. Functionally, catalyzes the ATP-dependent 2-thiolation of cytidine in position 32 of tRNA, to form 2-thiocytidine (s(2)C32). The sulfur atoms are provided by the cysteine/cysteine desulfurase (IscS) system. This chain is tRNA-cytidine(32) 2-sulfurtransferase, found in Rhizobium etli (strain ATCC 51251 / DSM 11541 / JCM 21823 / NBRC 15573 / CFN 42).